A 311-amino-acid chain; its full sequence is Porphobilinogen deaminase (311 aa).

At cysteine 241 the chain carries S-(dipyrrolylmethanemethyl)cysteine.

The protein belongs to the HMBS family. As to quaternary structure, monomer. Dipyrromethane is required as a cofactor.

It carries out the reaction 4 porphobilinogen + H2O = hydroxymethylbilane + 4 NH4(+). Its pathway is porphyrin-containing compound metabolism; protoporphyrin-IX biosynthesis; coproporphyrinogen-III from 5-aminolevulinate: step 2/4. Tetrapolymerization of the monopyrrole PBG into the hydroxymethylbilane pre-uroporphyrinogen in several discrete steps. The protein is Porphobilinogen deaminase (hemC) of Halalkalibacterium halodurans (strain ATCC BAA-125 / DSM 18197 / FERM 7344 / JCM 9153 / C-125) (Bacillus halodurans).